Reading from the N-terminus, the 374-residue chain is GDSL esterase/lipase At1g71250 (374 aa).

The first 28 residues, 1-28 (MNTNRKKMKVHIGGYVLILALTVSVILQ), serve as a signal peptide directing secretion. S48 serves as the catalytic Nucleophile. N162 carries an N-linked (GlcNAc...) asparagine glycan. Residues D338 and H341 contribute to the active site.

It belongs to the 'GDSL' lipolytic enzyme family.

Its subcellular location is the secreted. The protein is GDSL esterase/lipase At1g71250 of Arabidopsis thaliana (Mouse-ear cress).